The primary structure comprises 955 residues: Mediator of RNA polymerase II transcription subunit 16 (955 aa).

The protein belongs to the Mediator complex subunit 16 family. Component of the Mediator complex.

It is found in the nucleus. In terms of biological role, component of the Mediator complex, a coactivator involved in the regulated transcription of nearly all RNA polymerase II-dependent genes. Mediator functions as a bridge to convey information from gene-specific regulatory proteins to the basal RNA polymerase II transcription machinery. Mediator is recruited to promoters by direct interactions with regulatory proteins and serves as a scaffold for the assembly of a functional preinitiation complex with RNA polymerase II and the general transcription factors. This is Mediator of RNA polymerase II transcription subunit 16 (sin4) from Neosartorya fischeri (strain ATCC 1020 / DSM 3700 / CBS 544.65 / FGSC A1164 / JCM 1740 / NRRL 181 / WB 181) (Aspergillus fischerianus).